A 72-amino-acid polypeptide reads, in one-letter code: MALPKRRLSHARQGNRRAHVALSAPAVMECPQCNSPKLSHQACSVCGTYNGRTVVDVDAIAKKKADKSKGQQ.

It belongs to the bacterial ribosomal protein bL32 family.

In Dehalococcoides mccartyi (strain ATCC BAA-2266 / KCTC 15142 / 195) (Dehalococcoides ethenogenes (strain 195)), this protein is Large ribosomal subunit protein bL32.